The primary structure comprises 180 residues: MTDTRKFKATDLFSFNNINLDPLTETFNISFYLSYLNKWPSLCVVQESDLSDPTLMGYIMGKSEGTGKEWHTHVTAITVAPNSRRLGLARTMMDYLETVGNSENAFFVDLFVRASNALAIDFYKGLGYSVYRRVIGYYSNPHGKDEDSFDMRKPLSRDVNRESIRENGENFKCSPADVSF.

Residues 2-156 (TDTRKFKATD…DSFDMRKPLS (155 aa)) enclose the N-acetyltransferase domain.

The protein belongs to the acetyltransferase family. As to quaternary structure, component of the N-terminal acetyltransferase B (NatB) complex.

Its subcellular location is the cytoplasm. It localises to the nucleus. It catalyses the reaction N-terminal L-methionyl-L-asparaginyl-[protein] + acetyl-CoA = N-terminal N(alpha)-acetyl-L-methionyl-L-asparaginyl-[protein] + CoA + H(+). It carries out the reaction N-terminal L-methionyl-L-glutaminyl-[protein] + acetyl-CoA = N-terminal N(alpha)-acetyl-L-methionyl-L-glutaminyl-[protein] + CoA + H(+). The catalysed reaction is N-terminal L-methionyl-L-aspartyl-[protein] + acetyl-CoA = N-terminal N(alpha)-acetyl-L-methionyl-L-aspartyl-[protein] + CoA + H(+). The enzyme catalyses N-terminal L-methionyl-L-glutamyl-[protein] + acetyl-CoA = N-terminal N(alpha)-acetyl-L-methionyl-L-glutamyl-[protein] + CoA + H(+). In terms of biological role, catalytic subunit of the NatB N-terminal acetyltransferase, which catalyzes acetylation of the amino-terminal methionine residues of all proteins beginning with Met-Asp or Met-Glu and of some proteins beginning with Met-Asn, Met-Gln or Met-Met. The sequence is that of N-terminal acetyltransferase B complex catalytic subunit naa20 (naa20) from Schizosaccharomyces pombe (strain 972 / ATCC 24843) (Fission yeast).